The primary structure comprises 167 residues: Phospholipase A2 inhibitor alpha-like protein (167 aa).

Residues 1–19 form the signal peptide; the sequence is MQLILLSSLLLLGLSLANG. Positions 62 to 163 constitute a C-type lectin domain; the sequence is GSERLYVTNK…CDEDLLVVCE (102 aa). Intrachain disulfides connect Cys83/Cys162 and Cys140/Cys154.

The protein belongs to the alpha-type phospholipase A2 inhibitor family. Homotrimer.

The protein localises to the secreted. Has no PLA2 inhibitory activity. In Elaphe climacophora (Japanese rat snake), this protein is Phospholipase A2 inhibitor alpha-like protein.